The primary structure comprises 333 residues: Quinolinate synthase (333 aa).

The iminosuccinate site is built by H41 and S58. C103 contacts [4Fe-4S] cluster. Residues 129–131 (YIN) and S146 each bind iminosuccinate. C189 provides a ligand contact to [4Fe-4S] cluster. Iminosuccinate is bound by residues 215 to 217 (HPE) and T232. [4Fe-4S] cluster is bound at residue C282.

The protein belongs to the quinolinate synthase family. Type 2 subfamily. The cofactor is [4Fe-4S] cluster.

The protein resides in the cytoplasm. It catalyses the reaction iminosuccinate + dihydroxyacetone phosphate = quinolinate + phosphate + 2 H2O + H(+). It participates in cofactor biosynthesis; NAD(+) biosynthesis; quinolinate from iminoaspartate: step 1/1. In terms of biological role, catalyzes the condensation of iminoaspartate with dihydroxyacetone phosphate to form quinolinate. In Prochlorococcus marinus (strain MIT 9313), this protein is Quinolinate synthase.